Consider the following 266-residue polypeptide: Gasdermin bGSDM (266 aa).

A run of 4 beta stranded transmembrane segments spans residues 65-81 (FSGQ…GADL), 93-113 (EDKL…FAYE), 162-181 (QFTV…EAAV), and 187-203 (AHAS…SLQT). A C-terminal region region spans residues 248-266 (GEEDFSVQPLQAPSGLLKL).

This sequence belongs to the bacterial gasdermin family. As to quaternary structure, monomer. Forms large, homooligomeric ring-shaped pores when inserted in membranes.

The protein resides in the cytoplasm. It is found in the cell membrane. With respect to regulation, the full-length protein before cleavage is inactive: intramolecular interactions between the N-terminal domain and the C-terminal region mediate autoinhibition. The pyroptosis-like-inducing activity is carried by the released N-terminal domain (Gasdermin bGSDM, N-terminus). Precursor of a pore-forming protein involved in defense against bacteriophages. Cleavage of this precursor by its dedicated protease releases the active moiety (gasdermin bGSDM, N-terminus) which inserts into membranes, forming pores and triggering cell death. Expression of bGSDM and the neighboring protease gene (Ga0307981_100051430) is highly toxic in E.coli. In terms of biological role, pore-forming protein that causes membrane permeabilization via a pyroptosis-like activity. This is the active form which makes ring-like pores with an interior pore diameter of 130-190 Angstroms, when integrated in liposomes. The chain is Gasdermin bGSDM from Unknown prokaryotic organism.